Reading from the N-terminus, the 427-residue chain is G2/mitotic-specific cyclin-B1 (427 aa).

Residues 33–126 (ATSKPGLRPR…DTPSPSPMET (94 aa)) form a disordered region. Lys-73 carries the post-translational modification N6-acetyllysine. Positions 100–110 (EPEHVKEDKLS) are enriched in basic and acidic residues. Residue Ser-120 is modified to Phosphoserine; by CDK1. Ser-122 carries the phosphoserine modification. Residue Ser-127 is modified to Phosphoserine; by PLK1. Ser-141 is modified (phosphoserine). Interaction with CDK2 stretches follow at residues 163–171 (EYVKDIYAY) and 252–255 (YEEM). Thr-315 is subject to Phosphothreonine.

The protein belongs to the cyclin family. Cyclin AB subfamily. Interacts with the CDC2 protein kinase to form a serine/threonine kinase holoenzyme complex also known as maturation promoting factor (MPF). The cyclin subunit imparts substrate specificity to the complex. Binds HEI10. Interacts with catalytically active RALBP1 and CDC2 during mitosis to form an endocytotic complex during interphase. Interacts with CCNF; interaction is required for nuclear localization. Interacts with CDK5RAP3. Interacts with RFPL4A and UBE2A. Interacts with INCA1. Ubiquitinated by the SCF(NIPA) complex during interphase, leading to its destruction. Deubiquitinated by USP22 during G2/M phase. In terms of processing, phosphorylated by PLK1 at Ser-127 on centrosomes during prophase: phosphorylation by PLK1 does not cause nuclear import. Phosphorylation at Ser-141 was also reported to be mediated by PLK1 but Ser-127 seems to be the primary phosphorylation site.

It is found in the cytoplasm. It localises to the nucleus. Its subcellular location is the cytoskeleton. The protein localises to the microtubule organizing center. The protein resides in the centrosome. In terms of biological role, essential for the control of the cell cycle at the G2/M (mitosis) transition. This chain is G2/mitotic-specific cyclin-B1 (CCNB1), found in Bos taurus (Bovine).